Reading from the N-terminus, the 429-residue chain is S-adenosylmethionine synthase (429 aa).

Residue E9 participates in Mg(2+) binding. Position 15 (H15) interacts with ATP. E43 contacts K(+). E56 and Q99 together coordinate L-methionine. ATP-binding positions include 167-169 (DGK), 235-238 (SGRF), D246, 252-253 (RK), A269, K273, and K277. Position 246 (D246) interacts with L-methionine. K277 contributes to the L-methionine binding site.

Belongs to the AdoMet synthase family. Homotetramer. Mn(2+) serves as cofactor. Requires Mg(2+) as cofactor. Co(2+) is required as a cofactor. The cofactor is K(+).

It is found in the cytoplasm. It catalyses the reaction L-methionine + ATP + H2O = S-adenosyl-L-methionine + phosphate + diphosphate. It participates in amino-acid biosynthesis; S-adenosyl-L-methionine biosynthesis; S-adenosyl-L-methionine from L-methionine: step 1/1. In terms of biological role, catalyzes the formation of S-adenosylmethionine from methionine and ATP. The reaction comprises two steps that are both catalyzed by the same enzyme: formation of S-adenosylmethionine (AdoMet) and triphosphate, and subsequent hydrolysis of the triphosphate. In Carica papaya (Papaya), this protein is S-adenosylmethionine synthase (SAMS).